Here is a 392-residue protein sequence, read N- to C-terminus: Na(+)/H(+) antiporter NhaA 2 (392 aa).

11 helical membrane-spanning segments follow: residues 20–40 (FFAA…AALI), 61–81 (LSVS…LVGL), 99–119 (ALPG…YVAF), 127–147 (IGGW…VLSL), 158–178 (IFLS…IALF), 181–201 (SDLS…LVAL), 209–229 (LLPY…SGIH), 265–285 (VAFA…LSGI), 298–318 (VALG…ALAI), 336–356 (GVAA…ALAF), and 365–385 (EVKV…VVVL).

Belongs to the NhaA Na(+)/H(+) (TC 2.A.33) antiporter family.

Its subcellular location is the cell inner membrane. It catalyses the reaction Na(+)(in) + 2 H(+)(out) = Na(+)(out) + 2 H(+)(in). Its function is as follows. Na(+)/H(+) antiporter that extrudes sodium in exchange for external protons. In Pseudomonas syringae pv. syringae (strain B728a), this protein is Na(+)/H(+) antiporter NhaA 2.